Consider the following 786-residue polypeptide: Cadherin-9 (786 aa).

Residues 1–21 (MRTYSCLQLVIWTCIFHMVDN) form the signal peptide. N-linked (GlcNAc...) asparagine glycosylation occurs at Asn21. A propeptide spanning residues 22–52 (STLQGKDSSHFLRRIVNLKKDEGKMLHRAKR) is cleaved from the precursor. The Extracellular segment spans residues 22–614 (STLQGKDSSH…MLAAGLSTGA (593 aa)). 5 Cadherin domains span residues 54-158 (WMWN…EPKF), 159-267 (TKDL…PPRF), 268-382 (PQST…PPVF), 383-487 (SKLS…APEF), and 487-604 (FATY…AEAL). Asn254 carries an N-linked (GlcNAc...) asparagine glycan. Residues Asn454 and Asn535 are each glycosylated (N-linked (GlcNAc...) asparagine). A helical transmembrane segment spans residues 615 to 635 (LIAILLCVVILLTLIVLFAAL). Residues 636 to 786 (KRQRKKEPLI…AEMYGGNDSD (151 aa)) lie on the Cytoplasmic side of the membrane. The residue at position 785 (Ser785) is a Phosphoserine.

Its subcellular location is the cell membrane. Its function is as follows. Cadherins are calcium-dependent cell adhesion proteins. They preferentially interact with themselves in a homophilic manner in connecting cells; cadherins may thus contribute to the sorting of heterogeneous cell types. The polypeptide is Cadherin-9 (Cdh9) (Mus musculus (Mouse)).